The primary structure comprises 399 residues: Elongation factor Tu (399 aa).

One can recognise a tr-type G domain in the interval 10–204 (KPHVNIGTIG…AVDASIPEPE (195 aa)). Positions 19 to 26 (GHVDHGKT) are G1. 19–26 (GHVDHGKT) contacts GTP. A Mg(2+)-binding site is contributed by Thr-26. The interval 60-64 (GITIN) is G2. Residues 81 to 84 (DCPG) are G3. Residues 81–85 (DCPGH) and 136–139 (NKCD) each bind GTP. Residues 136–139 (NKCD) form a G4 region. Residues 174 to 176 (SGL) are G5.

The protein belongs to the TRAFAC class translation factor GTPase superfamily. Classic translation factor GTPase family. EF-Tu/EF-1A subfamily. As to quaternary structure, monomer.

Its subcellular location is the cytoplasm. The enzyme catalyses GTP + H2O = GDP + phosphate + H(+). Functionally, GTP hydrolase that promotes the GTP-dependent binding of aminoacyl-tRNA to the A-site of ribosomes during protein biosynthesis. This is Elongation factor Tu from Prochlorococcus marinus (strain SARG / CCMP1375 / SS120).